The chain runs to 365 residues: P43 5S RNA-binding protein (365 aa).

9 consecutive C2H2-type zinc fingers follow at residues 15–39, 45–69, 75–100, 106–130, 136–160, 163–187, 191–213, 220–245, and 251–275; these read LRCP…MAGH, WKCG…VKRH, LSCP…LYKH, LKCF…LSVH, SVCD…QKRH, YRCS…VKKH, LQCA…KATH, LPCP…RKLH, and HRCP…LVVH.

The 42S RNP particle comprises four subunits each of which contains one molecule of 5S RNA, three molecules of tRNA, two molecules of p50 (EF1-alpha) and one molecule of the 5S RNA binding protein 43.

P43 is a 5S RNA binding protein which is a major constituent of oocytes and comprises part of a 42S ribonucleoprotein storage particle. The protein is P43 5S RNA-binding protein of Xenopus laevis (African clawed frog).